The primary structure comprises 395 residues: Phosphoglycerate kinase (395 aa).

Substrate is bound by residues 21–23 (DLN), arginine 36, 59–62 (HLGR), arginine 113, and arginine 146. ATP is bound by residues lysine 197, glutamate 324, and 350–353 (GGDT).

The protein belongs to the phosphoglycerate kinase family. As to quaternary structure, monomer.

The protein localises to the cytoplasm. The enzyme catalyses (2R)-3-phosphoglycerate + ATP = (2R)-3-phospho-glyceroyl phosphate + ADP. The protein operates within carbohydrate degradation; glycolysis; pyruvate from D-glyceraldehyde 3-phosphate: step 2/5. This is Phosphoglycerate kinase from Acinetobacter baumannii (strain ATCC 17978 / DSM 105126 / CIP 53.77 / LMG 1025 / NCDC KC755 / 5377).